Reading from the N-terminus, the 405-residue chain is Syndecan-3 (405 aa).

A signal peptide spans 1–22; the sequence is MPAELRRLAVLLLLLSARAALA. At 23–347 the chain is on the extracellular side; sequence QPWRNENYER…PQKNILERKE (325 aa). The disordered stretch occupies residues 31 to 59; that stretch reads ERPVDLEGSGDDDPFGDDELDDIYSGSGS. The span at 38–52 shows a compositional bias: acidic residues; the sequence is GSGDDDPFGDDELDD. Ser-39, Ser-55, Ser-57, Ser-59, and Ser-66 each carry an O-linked (Xyl...) (glycosaminoglycan) serine glycan. Disordered stretches follow at residues 134–159 and 191–301; these read TTTA…ATTT and TRAT…ELGN. The span at 191–201 shows a compositional bias: low complexity; that stretch reads TRATTLETPTT. Residues 202-237 are compositionally biased toward polar residues; that stretch reads SIPETSVLTEVTTSRLVPSSTAKPRSLPKPSTSRTA. O-linked (Xyl...) (glycosaminoglycan) serine glycosylation is found at Ser-280, Ser-283, and Ser-330. A helical transmembrane segment spans residues 348–372; it reads VLIAVIVGGVVGALFAAFLVMLLIY. The Cytoplasmic portion of the chain corresponds to 373-405; it reads RMKKKDEGSYTLEEPKQANVTYQKPDKQEEFYA.

This sequence belongs to the syndecan proteoglycan family. In terms of processing, O-glycosylated within the Thr/Ser-rich region which could interact with lectin domains on other molecules. In terms of tissue distribution, proximal chondrogenic central core of embryonic limb buds where cartilage differentiation is being initiated.

The protein resides in the membrane. In terms of biological role, cell surface proteoglycan that may bear both heparan sulfate and chondroitin sulfate. The multiple functional domains provide potential sites for mediating the adhesive cell-matrix interactions and cytoskeletal reorganization involved in limb chondrogenesis. Interaction with other matrix ligands as well as phosphorylation and shedding of the ectodomain might be involved in cell shape changes that occur during chondrogenesis. Furthermore, shedding of the ectodomain might break the adhesive interactions that promoted condensation, thus facilitating the deposition of cartilage matrix molecules. The chain is Syndecan-3 (SDC3) from Gallus gallus (Chicken).